Consider the following 128-residue polypeptide: Ribonuclease P protein component (128 aa).

It belongs to the RnpA family. Consists of a catalytic RNA component (M1 or rnpB) and a protein subunit.

The enzyme catalyses Endonucleolytic cleavage of RNA, removing 5'-extranucleotides from tRNA precursor.. Its function is as follows. RNaseP catalyzes the removal of the 5'-leader sequence from pre-tRNA to produce the mature 5'-terminus. It can also cleave other RNA substrates such as 4.5S RNA. The protein component plays an auxiliary but essential role in vivo by binding to the 5'-leader sequence and broadening the substrate specificity of the ribozyme. In Prochlorococcus marinus (strain NATL2A), this protein is Ribonuclease P protein component.